The chain runs to 175 residues: Chorismate pyruvate-lyase (175 aa).

Substrate-binding residues include methionine 36, arginine 78, leucine 116, and glutamate 157.

It belongs to the UbiC family. Monomer.

The protein localises to the cytoplasm. It catalyses the reaction chorismate = 4-hydroxybenzoate + pyruvate. Its pathway is cofactor biosynthesis; ubiquinone biosynthesis. Its function is as follows. Removes the pyruvyl group from chorismate, with concomitant aromatization of the ring, to provide 4-hydroxybenzoate (4HB) for the ubiquinone pathway. The chain is Chorismate pyruvate-lyase from Hamiltonella defensa subsp. Acyrthosiphon pisum (strain 5AT).